The primary structure comprises 2562 residues: Zinc finger homeobox protein 2 (2562 aa).

Over residues 1–13 (MATLNSASPSGTV) the composition is skewed to polar residues. Disordered regions lie at residues 1–88 (MATL…PPKD) and 337–410 (PSPP…DPPP). Residues 56–73 (GGERLESGSDLDPPKEIG) are compositionally biased toward basic and acidic residues. C2H2-type zinc fingers lie at residues 446-469 (LKCPKCNWHYKYQQTLDVHMREKH) and 501-525 (YRCDVCNYSTTTKGNLSIHMQSDKH). Disordered regions lie at residues 530–559 (QGFQAGPGGQASPPEASLPPTSVGDKEPKT), 603–651 (PPGL…PDKP), and 669–705 (RKFPTAAPGSLSPETHLPPSQLLGSSSDGLPTSPSPD). Residues 609 to 622 (PGPPPPPGAAPTNP) are compositionally biased toward pro residues. Polar residues predominate over residues 690-704 (LLGSSSDGLPTSPSP). 3 C2H2-type zinc fingers span residues 752–776 (HRCKLCCYGTQLKANFQLHLKTDKH), 815–839 (LRCNICDFESNSKEKMQLHTRGSAH), and 864–888 (YHCLLCAWDTPSRLALLQHLRTPAH). The interval 923–966 (RLQTPGKASDTPLAQPPTSEKDAQNKTEQQASEVTEDRSGPPRD) is disordered. Residues 1003–1026 (YRCPLCQEQLVGRPALHFHLSHLH) form a C2H2-type 6 zinc finger. 2 disordered regions span residues 1058 to 1126 (NPVE…PAPR) and 1140 to 1166 (MSEEEEGAMGEPRSAEPTPADSRHPLT). Composition is skewed to pro residues over residues 1091–1101 (SPDPPLEPPLA) and 1114–1124 (DQPPSPAPSPA). 2 consecutive C2H2-type zinc fingers follow at residues 1185-1211 (YKCTVCKESFTQKNILLVHYNSVSHLH) and 1242-1266 (FKCTVCRVSYNQSSTLEIHMRSVLH). Residues 1278–1305 (RAEGAERGQEEFKEGETEGEAGTEKKGP) are compositionally biased toward basic and acidic residues. Positions 1278 to 1313 (RAEGAERGQEEFKEGETEGEAGTEKKGPDPGGFMSG) are disordered. The C2H2-type 9 zinc-finger motif lies at 1474–1497 (LACGACGKLFSNMLILKTHEEHVH). The segment at 1520 to 1584 (LYPPPVEPPK…EGSRGSLPPA (65 aa)) is disordered. The segment covering 1521–1531 (YPPPVEPPKPP) has biased composition (pro residues). A DNA-binding region (homeobox 1) is located at residues 1589-1648 (RRFSRTKFTEFQTQALQSFFETSAYPKDGEVERLASLLGLASRVVVVWFQNARQKARKNA). The segment at 1664–1687 (SGCRRCHATFACVFELVRHLKKCY) adopts a C2H2-type 10; degenerate zinc-finger fold. The disordered stretch occupies residues 1689–1760 (DQPPEEEEEA…EGKAPPSPPV (72 aa)). The segment covering 1690-1713 (QPPEEEEEAERGEEEEEVEEEEAE) has biased composition (acidic residues). Residues 1743-1752 (TRPESKESEG) are compositionally biased toward basic and acidic residues. A C2H2-type 11 zinc finger spans residues 1761 to 1783 (YACDQCAASFPSQDLLTTHHRLH). 7 disordered regions span residues 1814–1853 (SGTSSVTGTPLKRKHDDGSLSPTGSEAGGGGEGEPPKDKR), 1907–1934 (RKGQFRSTPGGVAGPAVKPTVPPSPAPF), 1971–2057 (PLPF…DSMG), 2114–2136 (KKAKLQGTAPPGSGGSSEGTSAA), 2186–2210 (PAPETPLAPKGPPATTPASSVPLGA), 2263–2313 (QTAG…PNSS), and 2391–2429 (LQQPPQAPEPTATAPPKPPELPASGEGESSEADELLTGS). A DNA-binding region (homeobox 2) is located at residues 1851–1910 (DKRLRTTILPEQLEILYRWYMQDSNPTRKMLDCISEEVGLKKRVVQVWFQNTRARERKGQ). Pro residues predominate over residues 1985 to 1996 (TPEPPPPLPPPA). Over residues 2008–2037 (KASPESEACSPSAGDLSDSSASSLAEPESP) the composition is skewed to low complexity. Positions 2038–2051 (GAGGTSGGPGGGTG) are enriched in gly residues. A DNA-binding region (homeobox 3) is located at residues 2058 to 2117 (QRRYRTQMSSLQLKIMKACYEAYRTPTMQECEVLGEEIGLPKRVIQVWFQNARAKEKKAK). Pro residues predominate over residues 2188–2200 (PETPLAPKGPPAT). Positions 2275-2286 (PVSNQTNSSTDP) are enriched in polar residues. A compositionally biased stretch (basic and acidic residues) spans 2295–2305 (SGDKVSGERKP). The span at 2395–2411 (PQAPEPTATAPPKPPEL) shows a compositional bias: pro residues. The segment at 2441 to 2461 (YLCRQCKMAFDGEAPATAHQR) adopts a C2H2-type 12; degenerate zinc-finger fold. A C2H2-type 13 zinc finger spans residues 2485 to 2509 (YHCLACEVLLSGREALASHLRSSAH). 2 disordered regions span residues 2506 to 2525 (SSAHRRKAAPPPGGPPITVT) and 2540 to 2562 (EEARLPHTDPNPKTTTTSTLLAL). Positions 2553–2562 (TTTTSTLLAL) are enriched in low complexity.

In terms of tissue distribution, expressed in brain (at protein level). Expressed at the highest levels in the pyramidal cell layer of the hippocampus, the suprachiasmatic nucleus, laterodorsal thalamic nucleus, lateral geniculate nucleus, substantia nigra pars compacta, and magnocellular part of the red nucleus (at protein level). Highly expressed in dorsal root ganglia. Expressed at lower levels in kidney, stomach, liver, heart and testis.

Its subcellular location is the nucleus. Its function is as follows. Transcriptional regulator that is critical for the regulation of pain perception and processing of noxious stimuli. This chain is Zinc finger homeobox protein 2, found in Mus musculus (Mouse).